Here is a 291-residue protein sequence, read N- to C-terminus: ATP synthase gamma chain (291 aa).

The protein belongs to the ATPase gamma chain family. In terms of assembly, F-type ATPases have 2 components, CF(1) - the catalytic core - and CF(0) - the membrane proton channel. CF(1) has five subunits: alpha(3), beta(3), gamma(1), delta(1), epsilon(1). CF(0) has three main subunits: a, b and c.

It localises to the cell inner membrane. In terms of biological role, produces ATP from ADP in the presence of a proton gradient across the membrane. The gamma chain is believed to be important in regulating ATPase activity and the flow of protons through the CF(0) complex. This is ATP synthase gamma chain from Aquifex aeolicus (strain VF5).